Here is a 380-residue protein sequence, read N- to C-terminus: ER-phagy receptor 1 (380 aa).

Residues 9 to 74 (DCYEILQVNH…DKRKWHEKDY (66 aa)) form the J domain. The C2H2-type zinc-finger motif lies at 270 to 294 (IMCMVCNKNFRSQNQLENHENSKKH). Residues 307–337 (KHAKEAQKNAESNKQPEDAPSESPYSNKVSS) are disordered. Ser344 is subject to Phosphoserine. Positions 352–355 (FTFV) match the AIM motif. The short motif at 361–367 (EFYTASE) is the FFAT element.

Interacts (via the AIM motif) with atg8. Interacts (via the FFAT motif) with the vesicle-associated membrane protein-associated protein (VAP) family proteins scs2 and scs22.

It localises to the endoplasmic reticulum. It is found in the preautophagosomal structure. Its function is as follows. Reticulophagy receptor required for autophagosomal sequestration of endoplasmic reticulum (ER) membranes during ER stress. Confers resistance to ER stress by promoting the autophagic degradation of the ER (ER-phagy or reticulophagy). Acts as a bridging molecule to mediate the association between atg8 on the autophagic membrane and the vesicle-associated membrane protein-associated proteins (VAPs) scs2 and scs22 on the ER. May play a role in meiosis. This Schizosaccharomyces pombe (strain 972 / ATCC 24843) (Fission yeast) protein is ER-phagy receptor 1.